The chain runs to 99 residues: MAVNPLDFLKNMSSVKNNIDNIKKEISKITVCGKAGSNIVTIEMDGEFNVKKVSINKEFFDDLDNDAFEQMIKSALNDAVSKVKEEIKLKTMGVLPFGM.

It belongs to the YbaB/EbfC family. As to quaternary structure, homodimer. Can form tetramers and octamers in solution.

The protein resides in the cytoplasm. It localises to the nucleoid. Functionally, binds to DNA and alters its conformation. May be involved in global regulation of gene expression. Binds specifically and non-specifically to DNA, preferentially to the 4 bp broken palindrome 5'-GTnAC-3'. Affects expression of a wide variety of genes, encoding both structural and metabolic proteins. This Borreliella burgdorferi (strain ATCC 35210 / DSM 4680 / CIP 102532 / B31) (Borrelia burgdorferi) protein is Nucleoid-associated protein EbfC.